Consider the following 689-residue polypeptide: Glycine--tRNA ligase beta subunit (689 aa).

The protein belongs to the class-II aminoacyl-tRNA synthetase family. In terms of assembly, tetramer of two alpha and two beta subunits.

It localises to the cytoplasm. The enzyme catalyses tRNA(Gly) + glycine + ATP = glycyl-tRNA(Gly) + AMP + diphosphate. The sequence is that of Glycine--tRNA ligase beta subunit from Dichelobacter nodosus (strain VCS1703A).